A 91-amino-acid polypeptide reads, in one-letter code: uncharacterized protein (91 aa).

It to phage P2 ORF83.

This is an uncharacterized protein from Escherichia phage 186 (Bacteriophage 186).